Reading from the N-terminus, the 137-residue chain is Large ribosomal subunit protein uL16 (137 aa).

The protein belongs to the universal ribosomal protein uL16 family. In terms of assembly, part of the 50S ribosomal subunit.

Its function is as follows. Binds 23S rRNA and is also seen to make contacts with the A and possibly P site tRNAs. The protein is Large ribosomal subunit protein uL16 of Ruegeria sp. (strain TM1040) (Silicibacter sp.).